The following is a 499-amino-acid chain: Probable malate:quinone oxidoreductase (499 aa).

The protein belongs to the MQO family. FAD serves as cofactor.

It carries out the reaction (S)-malate + a quinone = a quinol + oxaloacetate. It participates in carbohydrate metabolism; tricarboxylic acid cycle; oxaloacetate from (S)-malate (quinone route): step 1/1. The protein is Probable malate:quinone oxidoreductase of Exiguobacterium sp. (strain ATCC BAA-1283 / AT1b).